The sequence spans 118 residues: NIVLTQPESAVKKPGESHKLSCTVSGFDVNGHHMNWVKQVPGEGLEWLLSYRKTYNTYYASGIQGRITFSTESSTTFIEIPNLRVEDTAMYYCARGTGFPQWGYWGSGTFLTVTSVTQ.

Positions 1–109 constitute an Ig-like domain; that stretch reads NIVLTQPESA…PQWGYWGSGT (109 aa). Cysteines 22 and 93 form a disulfide.

As to expression, expressed mainly in lymphoid tissues including spleen, epigonal organ and circulating lymphocytes.

This is IgW heavy chain V region W26 from Heterodontus francisci (Horn shark).